Here is a 660-residue protein sequence, read N- to C-terminus: GRIP and coiled-coil domain-containing protein 2 (660 aa).

The interval Met-1–Pro-28 is disordered. Coiled coils occupy residues Glu-30–Asn-92, Glu-115–Ala-464, and Asp-517–Lys-596. In terms of domain architecture, GRIP spans Glu-585–Ala-636.

The protein is GRIP and coiled-coil domain-containing protein 2 of Caenorhabditis elegans.